Reading from the N-terminus, the 489-residue chain is Glycogen synthase (489 aa).

Position 15 (lysine 15) interacts with ADP-alpha-D-glucose.

It belongs to the glycosyltransferase 1 family. Bacterial/plant glycogen synthase subfamily.

It catalyses the reaction [(1-&gt;4)-alpha-D-glucosyl](n) + ADP-alpha-D-glucose = [(1-&gt;4)-alpha-D-glucosyl](n+1) + ADP + H(+). It participates in glycan biosynthesis; glycogen biosynthesis. Synthesizes alpha-1,4-glucan chains using ADP-glucose. This is Glycogen synthase from Francisella tularensis subsp. holarctica (strain FTNF002-00 / FTA).